The sequence spans 609 residues: Probable translation initiation factor IF-2 (609 aa).

One can recognise a tr-type G domain in the interval 12–230 (LRQPIVAVLG…VLAGLAQRYM (219 aa)). The tract at residues 21 to 28 (GHVDHGKT) is G1. 21–28 (GHVDHGKT) contacts GTP. Residues 46–50 (QITQH) form a G2 region. The segment at 86 to 89 (DTPG) is G3. Residues 86–90 (DTPGH) and 140–143 (NKID) contribute to the GTP site. The interval 140–143 (NKID) is G4. Positions 208–210 (SAK) are G5.

It belongs to the TRAFAC class translation factor GTPase superfamily. Classic translation factor GTPase family. IF-2 subfamily.

Functionally, function in general translation initiation by promoting the binding of the formylmethionine-tRNA to ribosomes. Seems to function along with eIF-2. This chain is Probable translation initiation factor IF-2, found in Ignicoccus hospitalis (strain KIN4/I / DSM 18386 / JCM 14125).